The primary structure comprises 197 residues: Signal-regulatory protein delta (197 aa).

An N-terminal signal peptide occupies residues 1-29 (MPIPASPLHPPLPSLLLYLLLELAGVTHV). The region spanning 31–135 (HVQQTEMSQT…IKEYQSGRGT (105 aa)) is the Ig-like V-type domain. A disulfide bond links Cys-51 and Cys-117. The interval 139-158 (VTEQNPRPPKNRPAGRAGSR) is disordered. Asn-174 is a glycosylation site (N-linked (GlcNAc...) asparagine).

The protein resides in the secreted. The chain is Signal-regulatory protein delta (SIRPD) from Homo sapiens (Human).